The following is a 123-amino-acid chain: Putative C-type lectin protein FPV003/FPV258 (123 aa).

Residues 21–122 enclose the C-type lectin domain; it reads CRGPYTSYNN…CNATYGFVCI (102 aa).

This Fowlpox virus (strain NVSL) (FPV) protein is Putative C-type lectin protein FPV003/FPV258.